A 148-amino-acid chain; its full sequence is Protein F15 (148 aa).

The protein belongs to the poxviridae F15 protein family.

This chain is Protein F15, found in Fowlpox virus (strain NVSL) (FPV).